Consider the following 422-residue polypeptide: Zinc finger protein zfp-2 (422 aa).

The tract at residues 95-119 is disordered; sequence AIPCTSSSMQPSTSSNPSSGEHQPV. The span at 99–113 shows a compositional bias: low complexity; sequence TSSSMQPSTSSNPSS. 7 C2H2-type zinc fingers span residues 171-194, 200-222, 229-251, 255-278, 300-322, 328-350, and 356-379; these read YRCT…QEVH, FRCF…LKDH, FSCD…HKMH, STCQ…STAH, YSCS…ERIH, YSCG…IRTH, and YGCG…LAAH.

In terms of tissue distribution, expressed in vulval cells and all somatic gonad structures such as spermatheca, sheath cells, uterine cells and distal tip cells.

Its subcellular location is the nucleus. Functionally, probable zinc finger transcription factor that acts as a transcriptional repressor. Acts redundantly with the transcriptional repressor lin-35 to control the development of somatic gonad lineages. May, in addition, suppress sensitivity to RNAi. This chain is Zinc finger protein zfp-2, found in Caenorhabditis elegans.